Here is a 435-residue protein sequence, read N- to C-terminus: ATP-dependent protease ATPase subunit HslU (435 aa).

ATP is bound by residues Ile-18, 60-65 (GVGKTE), Asp-248, Glu-313, and Arg-385.

Belongs to the ClpX chaperone family. HslU subfamily. As to quaternary structure, a double ring-shaped homohexamer of HslV is capped on each side by a ring-shaped HslU homohexamer. The assembly of the HslU/HslV complex is dependent on binding of ATP.

Its subcellular location is the cytoplasm. In terms of biological role, ATPase subunit of a proteasome-like degradation complex; this subunit has chaperone activity. The binding of ATP and its subsequent hydrolysis by HslU are essential for unfolding of protein substrates subsequently hydrolyzed by HslV. HslU recognizes the N-terminal part of its protein substrates and unfolds these before they are guided to HslV for hydrolysis. The chain is ATP-dependent protease ATPase subunit HslU from Rhizobium etli (strain ATCC 51251 / DSM 11541 / JCM 21823 / NBRC 15573 / CFN 42).